Consider the following 688-residue polypeptide: Zinc finger protein 770 (688 aa).

Residue Lys-11 forms a Glycyl lysine isopeptide (Lys-Gly) (interchain with G-Cter in SUMO2) linkage. 3 consecutive C2H2-type zinc fingers follow at residues 27 to 49 (YVCNICFKHFETPSKLARHYLIH), 55 to 77 (FECDVCHKTFRQLVHLERHQLTH), and 81 to 103 (FKCSICQRHFKNLKTFVKHQQLH). Glycyl lysine isopeptide (Lys-Gly) (interchain with G-Cter in SUMO2) cross-links involve residues Lys-112, Lys-121, and Lys-146. 3 C2H2-type zinc fingers span residues 160 to 182 (HACTICGKMFPSQSKLDRHVLIH), 188 to 210 (FKCVLCTKSFRQSTHLKIHQLTH), and 216 to 238 (FQCCFCQKGFKIQSKLLKHKQIH). Lys-262 is covalently cross-linked (Glycyl lysine isopeptide (Lys-Gly) (interchain with G-Cter in SUMO2)). The segment at 294 to 318 (FQCPKCEKCFESEQILNEHSCFPAR) adopts a C2H2-type 7; degenerate zinc-finger fold. Residues Lys-420 and Lys-437 each participate in a glycyl lysine isopeptide (Lys-Gly) (interchain with G-Cter in SUMO2) cross-link. 4 C2H2-type zinc fingers span residues 475–497 (CPCDKCEKVFPSISKLKRHYLIH), 503–525 (FGCNICGKSFRQSAHLKRHEQTH), 623–645 (YRCSVCAKSFRSPSKLERHYLIH), and 651–673 (FECSVCGKTFRQAPHWKRHQLTH). Lys-681 participates in a covalent cross-link: Glycyl lysine isopeptide (Lys-Gly) (interchain with G-Cter in SUMO2).

This sequence belongs to the krueppel C2H2-type zinc-finger protein family.

It is found in the nucleus. Functionally, may be involved in transcriptional regulation. In Pongo abelii (Sumatran orangutan), this protein is Zinc finger protein 770 (ZNF770).